A 432-amino-acid chain; its full sequence is Serine--tRNA ligase (432 aa).

Position 238 to 240 (238 to 240 (TAE)) interacts with L-serine. An ATP-binding site is contributed by 269-271 (RSE). An L-serine-binding site is contributed by Glu292. 356–359 (EVSS) lines the ATP pocket. Ser392 provides a ligand contact to L-serine.

This sequence belongs to the class-II aminoacyl-tRNA synthetase family. Type-1 seryl-tRNA synthetase subfamily. As to quaternary structure, homodimer. The tRNA molecule binds across the dimer.

The protein resides in the cytoplasm. The enzyme catalyses tRNA(Ser) + L-serine + ATP = L-seryl-tRNA(Ser) + AMP + diphosphate + H(+). The catalysed reaction is tRNA(Sec) + L-serine + ATP = L-seryl-tRNA(Sec) + AMP + diphosphate + H(+). It participates in aminoacyl-tRNA biosynthesis; selenocysteinyl-tRNA(Sec) biosynthesis; L-seryl-tRNA(Sec) from L-serine and tRNA(Sec): step 1/1. Functionally, catalyzes the attachment of serine to tRNA(Ser). Is also able to aminoacylate tRNA(Sec) with serine, to form the misacylated tRNA L-seryl-tRNA(Sec), which will be further converted into selenocysteinyl-tRNA(Sec). In Buchnera aphidicola subsp. Baizongia pistaciae (strain Bp), this protein is Serine--tRNA ligase.